The sequence spans 290 residues: Putative beta-lactamase HcpC (290 aa).

The N-terminal stretch at 1–25 (MLENVKKSLFRVLCLGALCLGGLMA) is a signal peptide. 7 TPR repeats span residues 29-62 (PKEL…KENS), 64-98 (CFNL…NYSN), 100-133 (CHLL…LKYA), 134-170 (EGCA…NDGD), 172-205 (CTIL…LKDS), 206-242 (PGCF…ENGG), and 244-278 (CFNL…GAKG). 7 cysteine pairs are disulfide-bonded: Cys-56/Cys-64, Cys-92/Cys-100, Cys-128/Cys-136, Cys-164/Cys-172, Cys-200/Cys-208, Cys-236/Cys-244, and Cys-272/Cys-280.

Belongs to the hcp beta-lactamase family.

The protein localises to the secreted. It catalyses the reaction a beta-lactam + H2O = a substituted beta-amino acid. Its function is as follows. May hydrolyze 6-aminopenicillinic acid and 7-aminocephalosporanic acid (ACA) derivatives. The polypeptide is Putative beta-lactamase HcpC (hcpC) (Helicobacter pylori (strain J99 / ATCC 700824) (Campylobacter pylori J99)).